The chain runs to 632 residues: Chaperone protein HtpG (632 aa).

An a; substrate-binding region spans residues 1 to 339; it reads MTQQTMSFQA…SSDLPLNVSR (339 aa). A b region spans residues 340-559; it reads EILQESRDVK…DNDMSGYLQR (220 aa). The tract at residues 560–632 is c; it reads MLKAAGQSAP…TNALLLSRAA (73 aa).

This sequence belongs to the heat shock protein 90 family. Homodimer.

The protein resides in the cytoplasm. Molecular chaperone. Has ATPase activity. The polypeptide is Chaperone protein HtpG (Burkholderia pseudomallei (strain 668)).